Here is a 278-residue protein sequence, read N- to C-terminus: DegV domain-containing protein YejH (278 aa).

Positions 3 to 277 constitute a DegV domain; that stretch reads IKIVTDSSIT…PGAWAIMIDY (275 aa). Threonine 60 and serine 92 together coordinate hexadecanoate.

In terms of biological role, may bind long-chain fatty acids, such as palmitate, and may play a role in lipid transport or fatty acid metabolism. This chain is DegV domain-containing protein YejH (yejH), found in Lactococcus lactis subsp. lactis (strain IL1403) (Streptococcus lactis).